Reading from the N-terminus, the 91-residue chain is Small ribosomal subunit protein uS19 (91 aa).

The protein belongs to the universal ribosomal protein uS19 family.

Protein S19 forms a complex with S13 that binds strongly to the 16S ribosomal RNA. In Ralstonia pickettii (strain 12J), this protein is Small ribosomal subunit protein uS19.